The chain runs to 233 residues: Pyridoxal 5'-phosphate synthase subunit PdxT (233 aa).

Residue 61–63 participates in L-glutamine binding; sequence GES. The Nucleophile role is filled by cysteine 93. Residues arginine 127 and 163-164 contribute to the L-glutamine site; that span reads IR. Residues histidine 212 and glutamate 214 each act as charge relay system in the active site.

Belongs to the glutaminase PdxT/SNO family. In terms of assembly, in the presence of PdxS, forms a dodecamer of heterodimers. Only shows activity in the heterodimer.

It catalyses the reaction aldehydo-D-ribose 5-phosphate + D-glyceraldehyde 3-phosphate + L-glutamine = pyridoxal 5'-phosphate + L-glutamate + phosphate + 3 H2O + H(+). The enzyme catalyses L-glutamine + H2O = L-glutamate + NH4(+). It participates in cofactor biosynthesis; pyridoxal 5'-phosphate biosynthesis. Functionally, catalyzes the hydrolysis of glutamine to glutamate and ammonia as part of the biosynthesis of pyridoxal 5'-phosphate. The resulting ammonia molecule is channeled to the active site of PdxS. This is Pyridoxal 5'-phosphate synthase subunit PdxT from Paenarthrobacter aurescens (strain TC1).